A 308-amino-acid polypeptide reads, in one-letter code: tRNA dimethylallyltransferase (308 aa).

An ATP-binding site is contributed by 14–21; the sequence is GPTASGKT. 16–21 contributes to the substrate binding site; the sequence is TASGKT. Interaction with substrate tRNA stretches follow at residues 39 to 42, 163 to 167, and 244 to 249; these read DSAL, QRLAR, and RCVGYR.

It belongs to the IPP transferase family. As to quaternary structure, monomer. It depends on Mg(2+) as a cofactor.

It carries out the reaction adenosine(37) in tRNA + dimethylallyl diphosphate = N(6)-dimethylallyladenosine(37) in tRNA + diphosphate. In terms of biological role, catalyzes the transfer of a dimethylallyl group onto the adenine at position 37 in tRNAs that read codons beginning with uridine, leading to the formation of N6-(dimethylallyl)adenosine (i(6)A). The protein is tRNA dimethylallyltransferase of Shewanella halifaxensis (strain HAW-EB4).